A 150-amino-acid polypeptide reads, in one-letter code: Endoribonuclease YbeY (150 aa).

3 residues coordinate Zn(2+): H113, H117, and H123.

It belongs to the endoribonuclease YbeY family. It depends on Zn(2+) as a cofactor.

It is found in the cytoplasm. Single strand-specific metallo-endoribonuclease involved in late-stage 70S ribosome quality control and in maturation of the 3' terminus of the 16S rRNA. This is Endoribonuclease YbeY from Wolbachia sp. subsp. Drosophila simulans (strain wRi).